The sequence spans 223 residues: Endo-1,4-beta-xylanase 2 (223 aa).

Positions 1-19 (MVSFTSLLAGVAAISGVLA) are cleaved as a signal peptide. The propeptide occupies 20–33 (APAAEVESVAVEKR). Glutamine 34 carries the post-translational modification Pyrrolidone carboxylic acid. The GH11 domain occupies 34–222 (QTIQPGTGYN…FSSGSASITV (189 aa)). Residues asparagine 71 and asparagine 94 are each glycosylated (N-linked (GlcNAc...) asparagine). Residues tyrosine 106 and tyrosine 110 each contribute to the substrate site. Glutamate 119 serves as the catalytic Nucleophile. Positions 121, 155, 159, 169, and 204 each coordinate substrate. Glutamate 210 serves as the catalytic Proton donor.

Belongs to the glycosyl hydrolase 11 (cellulase G) family.

The protein resides in the secreted. It carries out the reaction Endohydrolysis of (1-&gt;4)-beta-D-xylosidic linkages in xylans.. Its pathway is glycan degradation; xylan degradation. Functionally, glycoside hydrolase involved in the hydrolysis of xylan, a major plant cell wall hemicellulose made up of 1,4-beta-linked D-xylopyranose residues. Catalyzes the endohydrolysis of the main-chain 1,4-beta-glycosidic bonds connecting the xylose subunits yielding various xylooligosaccharides and xylose. The catalysis proceeds by a double-displacement reaction mechanism with a putative covalent glycosyl-enzyme intermediate, with retention of the anomeric configuration. Produces xylobiose and xylose as the main degradation products. The chain is Endo-1,4-beta-xylanase 2 from Hypocrea jecorina (strain ATCC 56765 / BCRC 32924 / NRRL 11460 / Rut C-30) (Trichoderma reesei).